The chain runs to 299 residues: Pyridoxal 5'-phosphate synthase subunit PdxS (299 aa).

Asp-24 serves as a coordination point for D-ribose 5-phosphate. Lys-81 (schiff-base intermediate with D-ribose 5-phosphate) is an active-site residue. Residue Gly-153 coordinates D-ribose 5-phosphate. Arg-165 contacts D-glyceraldehyde 3-phosphate. D-ribose 5-phosphate contacts are provided by residues Gly-219 and 240 to 241 (GS).

It belongs to the PdxS/SNZ family. In terms of assembly, in the presence of PdxT, forms a dodecamer of heterodimers.

The enzyme catalyses aldehydo-D-ribose 5-phosphate + D-glyceraldehyde 3-phosphate + L-glutamine = pyridoxal 5'-phosphate + L-glutamate + phosphate + 3 H2O + H(+). It functions in the pathway cofactor biosynthesis; pyridoxal 5'-phosphate biosynthesis. In terms of biological role, catalyzes the formation of pyridoxal 5'-phosphate from ribose 5-phosphate (RBP), glyceraldehyde 3-phosphate (G3P) and ammonia. The ammonia is provided by the PdxT subunit. Can also use ribulose 5-phosphate and dihydroxyacetone phosphate as substrates, resulting from enzyme-catalyzed isomerization of RBP and G3P, respectively. The chain is Pyridoxal 5'-phosphate synthase subunit PdxS from Methanococcus maripaludis (strain C7 / ATCC BAA-1331).